The following is a 269-amino-acid chain: Cytochrome c oxidase subunit 3 (269 aa).

Helical transmembrane passes span Asn-46 to Phe-66, Gly-90 to Phe-110, Pro-138 to Ile-160, Ala-167 to Val-187, Phe-207 to Leu-227, and Ile-247 to Trp-267.

The protein belongs to the cytochrome c oxidase subunit 3 family. In terms of assembly, component of the cytochrome c oxidase (complex IV, CIV), a multisubunit enzyme composed of a catalytic core of 3 subunits and several supernumerary subunits. The complex exists as a monomer or a dimer and forms supercomplexes (SCs) in the inner mitochondrial membrane with ubiquinol-cytochrome c oxidoreductase (cytochrome b-c1 complex, complex III, CIII).

It is found in the mitochondrion inner membrane. It catalyses the reaction 4 Fe(II)-[cytochrome c] + O2 + 8 H(+)(in) = 4 Fe(III)-[cytochrome c] + 2 H2O + 4 H(+)(out). Functionally, component of the cytochrome c oxidase, the last enzyme in the mitochondrial electron transport chain which drives oxidative phosphorylation. The respiratory chain contains 3 multisubunit complexes succinate dehydrogenase (complex II, CII), ubiquinol-cytochrome c oxidoreductase (cytochrome b-c1 complex, complex III, CIII) and cytochrome c oxidase (complex IV, CIV), that cooperate to transfer electrons derived from NADH and succinate to molecular oxygen, creating an electrochemical gradient over the inner membrane that drives transmembrane transport and the ATP synthase. Cytochrome c oxidase is the component of the respiratory chain that catalyzes the reduction of oxygen to water. Electrons originating from reduced cytochrome c in the intermembrane space (IMS) are transferred via the dinuclear copper A center (CU(A)) of subunit 2 and heme A of subunit 1 to the active site in subunit 1, a binuclear center (BNC) formed by heme A3 and copper B (CU(B)). The BNC reduces molecular oxygen to 2 water molecules using 4 electrons from cytochrome c in the IMS and 4 protons from the mitochondrial matrix. In Podospora anserina (strain S / ATCC MYA-4624 / DSM 980 / FGSC 10383) (Pleurage anserina), this protein is Cytochrome c oxidase subunit 3 (COIII).